A 276-amino-acid polypeptide reads, in one-letter code: uncharacterized protein (276 aa).

The region spanning 20 to 137 (PVLIFIPGAN…PPINTFLPDS (118 aa)) is the AB hydrolase-1 domain. Residues 57–76 (GESELTEPLPDSASNPDSDY) are disordered.

This sequence belongs to the AB hydrolase superfamily.

This is an uncharacterized protein from Staphylococcus aureus (strain N315).